A 486-amino-acid chain; its full sequence is Protein pleiotropic regulatory locus 1 (486 aa).

The segment at 62 to 101 is disordered; it reads EPVVSQPPRQPDRINEQPGPSNALSLAAPEGSKSTQKGAT. 7 WD repeats span residues 174–204, 216–246, 258–288, 300–330, 342–371, 384–413, and 433–463; these read GHLG…KIWD, GHIE…KCWD, GHLS…RVWD, GHDN…KFWD, HHKK…KKFS, QQKT…WFWD, and ESEA…KMWK. 2 short sequence motifs (DWD box) span residues 275–290 and 317–332; these read LLTG…WDIR and VVTG…WDLR. The tract at residues 465–486 is disordered; it reads DENATPETHPINFKPPKEIRRF.

It belongs to the WD repeat PRL1/PRL2 family. In terms of assembly, component of the multiprotein assembly MOS4-associated complex (MAC) at least composed of MOS4, CDC5, PRL1 and PRP19. Interacts with CDC5. Component of the CUL4-RBX1-DDB1-PRL1 E3 ubiquitin-protein ligase complex. Interacts with DDB1A through its DWD motif. Interacts with AKIN10, AKIN11 and PIPC. Interacts with KAP2.

It localises to the nucleus. The protein operates within protein modification; protein ubiquitination. Its function is as follows. Pleiotropic regulator of glucose, stress and hormone responses. Also regulates cytochrome P450 CYP90A1/CPD. Coordinates the expression of hormone- and stress-related genes and genes related to cell wall modification and growth, leading to altered sugar-dependent growth and developmental responses. Component of the MAC complex that probably regulates defense responses through transcriptional control and thereby is essential for plant innate immunity. By suppressing the expression of several (1)O(2)-responsive genes, PRL1 seems to play a major role in modulating responses of plants to environmental changes by interconnecting (1)O(2)-mediated retrograde signaling with other signaling pathways. Acts as a negative regulator of SNF1-related protein kinases AKIN10 and AKIN11 via the inhibition of their interaction with SKP1/ASK1. Component of the CUL4-RBX1-DDB1-PRL1 E3 ubiquitin-protein ligase complex, PRL1 may function as the substrate recognition module within this complex, leading to the AKIN10 degradation. In Arabidopsis thaliana (Mouse-ear cress), this protein is Protein pleiotropic regulatory locus 1 (PRL1).